Consider the following 282-residue polypeptide: Chorismate dehydratase (282 aa).

This sequence belongs to the MqnA/MqnD family. MqnA subfamily.

The enzyme catalyses chorismate = 3-[(1-carboxyvinyl)-oxy]benzoate + H2O. Its pathway is quinol/quinone metabolism; menaquinone biosynthesis. Catalyzes the dehydration of chorismate into 3-[(1-carboxyvinyl)oxy]benzoate, a step in the biosynthesis of menaquinone (MK, vitamin K2). This Streptomyces coelicolor (strain ATCC BAA-471 / A3(2) / M145) protein is Chorismate dehydratase.